An 87-amino-acid chain; its full sequence is Pyocin-S1 immunity protein (87 aa).

The protein belongs to the colicins ColE2/ColE8/ColE9 and pyocins S1/S2 family.

In Pseudomonas aeruginosa, this protein is Pyocin-S1 immunity protein (imm1).